A 78-amino-acid polypeptide reads, in one-letter code: Acyl carrier protein (78 aa).

Positions 2 to 77 (STIEESVKAI…AAIDFIQASQ (76 aa)) constitute a Carrier domain. Position 37 is an O-(pantetheine 4'-phosphoryl)serine (S37).

It belongs to the acyl carrier protein (ACP) family. Post-translationally, 4'-phosphopantetheine is transferred from CoA to a specific serine of apo-ACP by AcpS. This modification is essential for activity because fatty acids are bound in thioester linkage to the sulfhydryl of the prosthetic group.

It localises to the cytoplasm. The protein operates within lipid metabolism; fatty acid biosynthesis. Its function is as follows. Carrier of the growing fatty acid chain in fatty acid biosynthesis. The polypeptide is Acyl carrier protein (Sodalis glossinidius (strain morsitans)).